Here is a 643-residue protein sequence, read N- to C-terminus: Sodium-dependent nutrient amino acid transporter 1 (643 aa).

Residues Met1 to Arg38 are disordered. At Met1–Asn40 the chain is on the cytoplasmic side. Positions Pro8–Thr26 are enriched in low complexity. Residues Glu27–Ala36 are compositionally biased toward basic and acidic residues. A run of 3 helical transmembrane segments spans residues Trp41–Val61, Gly74–Leu94, and Ser111–Ile131. N-linked (GlcNAc...) asparagine glycans are attached at residues Asn185, Asn190, and Asn200. The next 9 membrane-spanning stretches (helical) occupy residues Pro231–Met251, Ala260–Val280, Ala309–Ser329, Ile343–Leu363, Leu403–Leu423, Val449–Leu469, Thr476–Leu496, Cys518–Ile538, and Val554–Tyr574.

It belongs to the sodium:neurotransmitter symporter (SNF) (TC 2.A.22) family.

Its subcellular location is the membrane. Functionally, unusual broad substrate spectrum amino acid:sodium cotransporter that promotes absorption of the D isomers of essential amino acids. Neutral amino acids are the preferred substrates, especially methionine and phenylalanine. This Drosophila simulans (Fruit fly) protein is Sodium-dependent nutrient amino acid transporter 1.